We begin with the raw amino-acid sequence, 375 residues long: 2-heptyl-3-hydroxy-4(1H)-quinolone synthase (375 aa).

Belongs to the 3-hydroxybenzoate 6-hydroxylase family.

It catalyses the reaction 2-heptyl-4(1H)-quinolone + NADH + O2 + H(+) = 2-heptyl-3-hydroxy-4(1H)-quinolone + NAD(+) + H2O. Involved in the degradation pathway of the Pseudomonas aeruginosa quorum sensing signal molecule HHQ (2-heptyl-4(1H)-quinolone) to anthranilate. Catalyzes the hydroxylation of HHQ to PQS (2-heptyl-3-hydroxy-4(1H)-quinolone). In Mycobacteroides abscessus (strain ATCC 19977 / DSM 44196 / CCUG 20993 / CIP 104536 / JCM 13569 / NCTC 13031 / TMC 1543 / L948) (Mycobacterium abscessus), this protein is 2-heptyl-3-hydroxy-4(1H)-quinolone synthase.